Here is a 315-residue protein sequence, read N- to C-terminus: Calumenin-B (315 aa).

The first 19 residues, 1 to 19 (MEQWPLLFVVALCILQSSS), serve as a signal peptide directing secretion. Residues 22 to 39 (MEKKDRVHHDAPLSNKDH) show a composition bias toward basic and acidic residues. Residues 22-42 (MEKKDRVHHDAPLSNKDHDDE) form a disordered region. EF-hand domains lie at 68–103 (ESKE…AQRR), 104–139 (WIYE…YILD), 151–186 (QMMT…EEFD), 188–223 (MKDI…QNGD), 229–264 (WVKT…ADYD), and 265–300 (HAEA…FVGS). Positions 81, 83, 85, 92, 117, 119, 121, 128, 164, 166, 168, 170, 175, 201, 203, 205, 212, 242, 244, 246, 248, 253, 278, 280, 282, 284, and 289 each coordinate Ca(2+). Positions 312–315 (HDEF) match the Prevents secretion from ER motif.

This sequence belongs to the CREC family. Interacts with ggcx.

It localises to the endoplasmic reticulum membrane. Its subcellular location is the golgi apparatus. The protein resides in the secreted. It is found in the melanosome. The protein localises to the sarcoplasmic reticulum lumen. Involved in regulation of vitamin K-dependent carboxylation of multiple N-terminal glutamate residues. Seems to inhibit gamma-carboxylase ggcx. Binds 7 calcium ions with a low affinity. The protein is Calumenin-B (calub) of Danio rerio (Zebrafish).